Reading from the N-terminus, the 539-residue chain is Chaperonin GroEL (539 aa).

Residues 29–32, 86–90, G413, 476–478, and D492 each bind ATP; these read TIGP, DGTTT, and NAA.

The protein belongs to the chaperonin (HSP60) family. In terms of assembly, forms a cylinder of 14 subunits composed of two heptameric rings stacked back-to-back. Interacts with the co-chaperonin GroES.

The protein resides in the cytoplasm. It catalyses the reaction ATP + H2O + a folded polypeptide = ADP + phosphate + an unfolded polypeptide.. Its function is as follows. Together with its co-chaperonin GroES, plays an essential role in assisting protein folding. The GroEL-GroES system forms a nano-cage that allows encapsulation of the non-native substrate proteins and provides a physical environment optimized to promote and accelerate protein folding. This is Chaperonin GroEL from Staphylococcus epidermidis.